Reading from the N-terminus, the 358-residue chain is Stearoyl-CoA desaturase 2 (358 aa).

Topologically, residues 1–71 (MPAHILQEIS…EGPPPKLEYV (71 aa)) are cytoplasmic. The interval 14 to 43 (SATTTITAPPSGGQQNGGEKFEKNPHHWGA) is disordered. Over residues 32 to 43 (EKFEKNPHHWGA) the composition is skewed to basic and acidic residues. A helical membrane pass occupies residues 72–92 (WRNIVLMALLHIGALYGITLV). Residue Asn74 coordinates substrate. Over 93–96 (PSCK) the chain is Lumenal. The chain crosses the membrane as a helical span at residues 97–117 (VYTCLFAYLYYVISALGITAG). Residues 118–216 (AHRLWSHRTY…EKLVMFQRRY (99 aa)) are Cytoplasmic-facing. Fe cation is bound by residues His119 and His124. Positions 119 to 124 (HRLWSH) match the Histidine box-1 motif. Substrate contacts are provided by Asn147, Arg154, and Asp155. His156, His159, and His160 together coordinate Fe cation. Positions 156 to 160 (HRAHH) match the Histidine box-2 motif. 2 residues coordinate substrate: Arg187 and Lys188. Residues 217-236 (YKPGLLLMCFILPTLVPWYC) form a helical membrane-spanning segment. Over 237 to 240 (WGET) the chain is Lumenal. Residues 241-262 (FVNSLCVSTFLRYAVVLNATWL) traverse the membrane as a helical segment. Substrate is bound at residue Trp261. At 263 to 358 (VNSAAHLYGY…RTGEESCKSG (96 aa)) the chain is on the cytoplasmic side. Residues His268, His297, His300, and His301 each coordinate Fe cation. A Histidine box-3 motif is present at residues 297-301 (HNYHH).

It belongs to the fatty acid desaturase type 1 family. It depends on Fe(2+) as a cofactor. In terms of tissue distribution, detected in brain and adipose tissue, and at much lower levels in testis. Detected in liver when rats are kept on a fat-free diet, but not when their food contains unsaturated fatty acids.

The protein resides in the endoplasmic reticulum membrane. It is found in the microsome membrane. The enzyme catalyses octadecanoyl-CoA + 2 Fe(II)-[cytochrome b5] + O2 + 2 H(+) = (9Z)-octadecenoyl-CoA + 2 Fe(III)-[cytochrome b5] + 2 H2O. The catalysed reaction is hexadecanoyl-CoA + 2 Fe(II)-[cytochrome b5] + O2 + 2 H(+) = (9Z)-hexadecenoyl-CoA + 2 Fe(III)-[cytochrome b5] + 2 H2O. Its function is as follows. Stearoyl-CoA desaturase that utilizes O(2) and electrons from reduced cytochrome b5 to introduce the first double bond into saturated fatty acyl-CoA substrates. Catalyzes the insertion of a cis double bond at the delta-9 position into fatty acyl-CoA substrates including palmitoyl-CoA and stearoyl-CoA. Gives rise to a mixture of 16:1 and 18:1 unsaturated fatty acids. Contributes to the biosynthesis of membrane phospholipids, cholesterol esters and triglycerides, especially during embryonic development and in neonates. Important for normal permeability barrier function of the skin in neonates. The chain is Stearoyl-CoA desaturase 2 (Scd2) from Rattus norvegicus (Rat).